A 367-amino-acid chain; its full sequence is Septin-1 (367 aa).

The Septin-type G domain maps to 22 to 296 (KGFDFTLMVA…EGYRARCLQS (275 aa)). Residues 32-39 (GESGLGKS) are G1 motif. GTP contacts are provided by residues 32–39 (GESGLGKS), Thr66, Gly92, and 171–179 (KADALMPKE). The interval 89 to 92 (DTPG) is G3 motif. The interval 170–173 (GKAD) is G4 motif. Ser206 carries the phosphoserine modification. GTP-binding residues include Gly229 and Arg245. At Ser248 the chain carries Phosphoserine; by AURKB. Thr251 carries the phosphothreonine modification. Phosphoserine; by AURKB is present on residues Ser307 and Ser315.

This sequence belongs to the TRAFAC class TrmE-Era-EngA-EngB-Septin-like GTPase superfamily. Septin GTPase family. As to quaternary structure, septins polymerize into heterooligomeric protein complexes that form filaments, and can associate with cellular membranes, actin filaments and microtubules. GTPase activity is required for filament formation. Interacts with AURKB.

Its subcellular location is the cytoplasm. It localises to the cytoskeleton. It is found in the microtubule organizing center. The protein localises to the centrosome. The protein resides in the midbody. Filament-forming cytoskeletal GTPase. May play a role in cytokinesis (Potential). This is Septin-1 from Bos taurus (Bovine).